Consider the following 692-residue polypeptide: Mitogen-activated protein kinase kinase kinase 7-interacting protein 3 homolog (692 aa).

The region spanning 8 to 51 (LDIQVLNDLQQRFPEIPRDVVSQCMLQNNSNLDACYRALTQESC) is the CUE domain. Disordered regions lie at residues 138–159 (NDQN…GVGT), 206–333 (YGTP…PYGP), and 349–427 (SQQR…VVMS). Polar residues-rich tracts occupy residues 215–230 (PSQN…NTAW), 249–298 (QSFQ…QTSH), and 349–387 (SQQR…SGSP). Residues 409–422 (SQPPTTTGSPTPSS) are compositionally biased toward low complexity. Positions 496–580 (ALLLHQRARM…QKEIDLLQSR (85 aa)) form a coiled coil. Residues 598–662 (SPGPAVPPNT…SPRPGRDEDF (65 aa)) form a disordered region. A compositionally biased stretch (basic and acidic residues) spans 608–620 (CKKESSETTSGER). The segment at 662–692 (FEGSPWNCNSCTFLNHPALNRCEQCEMPRFT) adopts a RanBP2-type zinc-finger fold.

In terms of biological role, may play a role in signaling pathway. The polypeptide is Mitogen-activated protein kinase kinase kinase 7-interacting protein 3 homolog (map3k7ip3) (Xenopus laevis (African clawed frog)).